Consider the following 544-residue polypeptide: MNKRAMLGAIGLAFGLMAWPFGASAKGKSMVWNEQWKTPSFVSGSLLGRCSQELVYRYLDQEKNTFQLGGQARERLSLIGNKLDELGHTVMRFEQAIAASLCMGAVLVAHVNDGELSSLSGTLIPNLDKRTLKTEAAISIQQAEMIAKQDVADRVTKERPAAEEGKPTRLVIYPDEETPRLAYEVNVRFLTPVPGNWIYMIDAADGKVLNKWNQMDEAKPGGAQPVAGTSTVGVGRGVLGDQKYINTTYSSYYGYYYLQDNTRGSGIFTYDGRNRTVLPGSLWADGDNQFFASYDAAAVDAHYYAGVVYDYYKNVHGRLSYDGSNAAIRSTVHYGRGYNNAFWNGSQMVYGDGDGQTFLPFSGGIDVVGHELTHAVTDYTAGLVYQNESGAINEAMSDIFGTLVEFYANRNPDWEIGEDIYTPGVAGDALRSMSDPAKYGDPDHYSKRYTGTQDNGGVHTNSGIINKAAYLLSQGGVHYGVSVTGIGRDKMGKIFYRALVYYLTPTSNFSQLRAACVQAAADLYGSTSQEVNSVKQAFNAVGVY.

An N-terminal signal peptide occupies residues 1-25; that stretch reads MNKRAMLGAIGLAFGLMAWPFGASA. Positions 26-225 are cleaved as a propeptide — activation peptide; that stretch reads KGKSMVWNEQ…DEAKPGGAQP (200 aa). Asp-285, Asp-287, Gln-289, and Asp-366 together coordinate Ca(2+). His-370 provides a ligand contact to Zn(2+). Glu-371 is a catalytic residue. Zn(2+)-binding residues include His-374 and Glu-394. Ca(2+) is bound by residues Glu-405, Asn-411, Asp-413, Glu-415, Glu-418, Tyr-421, Thr-422, Val-425, and Asp-428. The active-site Proton donor is His-459.

The protein belongs to the peptidase M4 family. The cofactor is Ca(2+). Zn(2+) serves as cofactor.

The protein localises to the secreted. The catalysed reaction is Similar, but not identical, to that of thermolysin.. Functionally, extracellular zinc metalloprotease. The chain is Bacillolysin (npr) from Bacillus caldolyticus.